We begin with the raw amino-acid sequence, 430 residues long: uncharacterized protein (430 aa).

This is an uncharacterized protein from Bos taurus (Bovine).